A 1021-amino-acid polypeptide reads, in one-letter code: INO80 complex subunit D (1021 aa).

Residue Lys87 forms a Glycyl lysine isopeptide (Lys-Gly) (interchain with G-Cter in SUMO2) linkage. A Phosphoserine modification is found at Ser132. 5 disordered regions span residues 194-239 (FSTP…PMQG), 514-570 (RGDN…SMPT), 808-844 (RQQYSSDHSHSSPHGSHYDSEHVPSPYSDHITSPHTS), 911-940 (SLSTPPTTSNSETTQPAFATVTPSSSSVLP), and 976-1021 (QLSS…PSPN). Residues 224–239 (VCKSPQPQNTSLPMQG) show a composition bias toward polar residues. The segment covering 520–554 (KVQHQQQRKPRKKTKPPALTKKHKKKRRRGPRRPQ) has biased composition (basic residues). Residues 911-926 (SLSTPPTTSNSETTQP) show a composition bias toward low complexity. The span at 931 to 940 (VTPSSSSVLP) shows a compositional bias: polar residues. Positions 995–1014 (APPTGFTATGATATSTNNAS) are enriched in low complexity.

It belongs to the INO80D family. Component of the chromatin remodeling INO80 complex; specifically part of a complex module associated with the N-terminus of INO80.

Its subcellular location is the nucleus. Putative regulatory component of the chromatin remodeling INO80 complex which is involved in transcriptional regulation, DNA replication and probably DNA repair. The chain is INO80 complex subunit D from Mus musculus (Mouse).